We begin with the raw amino-acid sequence, 237 residues long: DNA repair protein RecO (237 aa).

Belongs to the RecO family.

Its function is as follows. Involved in DNA repair and RecF pathway recombination. This chain is DNA repair protein RecO, found in Rickettsia akari (strain Hartford).